The sequence spans 1416 residues: Uveal autoantigen with coiled-coil domains and ankyrin repeats (1416 aa).

At methionine 1 the chain carries N-acetylmethionine. The disordered stretch occupies residues 1–24; it reads MKSLKSRLRRQDVPGPASSGAAAA. ANK repeat units lie at residues 38–66, 67–96, 100–129, 133–162, 166–195, and 199–228; these read LMKAAERGDVEKVTSILAKKGVNPGKLDV, EGRSVFHVVTSKGNLECLNAILIHGVDITT, AGRNALHLAAKYGHALCLQKLLQYNCPTEH, QGRTALHDAAMADCPSSIQLLCDHGASVNA, DGRTPLVLATQMSRPTICQLLIDRGADVNS, and QNRTALMLGCEYGCRDAVEVLIKNGADISL. 2 coiled-coil regions span residues 286–374 and 438–1386; these read VKSH…NRFK and ENEI…IYRT. Residue lysine 1035 forms a Glycyl lysine isopeptide (Lys-Gly) (interchain with G-Cter in SUMO2) linkage.

Component of the apoptosome complex, composed of APAF1, pro-caspase-9 and UACA. In the complex, it probably interacts directly with APAF1. Interacts with LGALS3, ARF6 and ACTB. Interacts with RAB39A. Highly expressed in skeletal muscle, heart, kidney and pancreas. Expressed in choroid, retina and epidermal melanocytes. Expressed in eye muscles and thyroid follicular cells.

The protein localises to the nucleus. Its subcellular location is the cytoplasm. It is found in the cytoskeleton. Functionally, regulates APAF1 expression and plays an important role in the regulation of stress-induced apoptosis. Promotes apoptosis by regulating three pathways, apoptosome up-regulation, LGALS3/galectin-3 down-regulation and NF-kappa-B inactivation. Regulates the redistribution of APAF1 into the nucleus after proapoptotic stress. Down-regulates the expression of LGALS3 by inhibiting NFKB1. In terms of biological role, modulates isoactin dynamics to regulate the morphological alterations required for cell growth and motility. Interaction with ARF6 may modulate cell shape and motility after injury. May be involved in multiple neurite formation. This Homo sapiens (Human) protein is Uveal autoantigen with coiled-coil domains and ankyrin repeats (UACA).